The chain runs to 304 residues: Lipid droplet-associated hydrolase (304 aa).

Ser-119 acts as the Nucleophile in catalysis. Residues Asp-250 and His-279 each act as charge relay system in the active site.

Belongs to the AB hydrolase superfamily. LDAH family.

The protein localises to the lipid droplet. It carries out the reaction a cholesterol ester + H2O = cholesterol + a fatty acid + H(+). Functionally, probable serine lipid hydrolase associated with lipid droplets. Has low cholesterol esterase activity. Appears to lack triglyceride lipase activity. Involved in cholesterol and triglyceride homeostasis; stimulates cellular triglyceride accumulation and cellular cholesterol release. In Dictyostelium discoideum (Social amoeba), this protein is Lipid droplet-associated hydrolase.